The following is a 434-amino-acid chain: Glutamyl-tRNA reductase (434 aa).

Residues 49–52, Ser109, 114–116, and Gln120 each bind substrate; these read TCNR and EPQ. The active-site Nucleophile is the Cys50. An NADP(+)-binding site is contributed by 189–194; that stretch reads GAGEMC.

It belongs to the glutamyl-tRNA reductase family. Homodimer.

It carries out the reaction (S)-4-amino-5-oxopentanoate + tRNA(Glu) + NADP(+) = L-glutamyl-tRNA(Glu) + NADPH + H(+). It functions in the pathway porphyrin-containing compound metabolism; protoporphyrin-IX biosynthesis; 5-aminolevulinate from L-glutamyl-tRNA(Glu): step 1/2. Functionally, catalyzes the NADPH-dependent reduction of glutamyl-tRNA(Glu) to glutamate 1-semialdehyde (GSA). In Geobacter sulfurreducens (strain ATCC 51573 / DSM 12127 / PCA), this protein is Glutamyl-tRNA reductase.